A 418-amino-acid polypeptide reads, in one-letter code: MRTKAAGCAERRPLQPRTEAAAAPAGRAMPSEYTYVKLRSDCSRPSLQWYTRAQSKMRRPSLLLKDILKCTLLVFGVWILYILKLNYTTEECDMKKMHYVDPDHVKRAQKYAQQVLQKECRPKFAKTSMALLFEHRYSVDLLPFVQKAPKDSEAESKYDPPFGFRKFSSKVQTLLELLPEHDLPEHLKAKTCRRCVVIGSGGILHGLELGHTLNQFDVVIRLNSAPVEGYSEHVGNKTTIRMTYPEGAPLSDLEYYSNDLFVAVLFKSVDFNWLQAMVKKETLPFWVRLFFWKQVAEKIPLQPKHFRILNPVIIKETAFDILQYSEPQSRFWGRDKNVPTIGVIAVVLATHLCDEVSLAGFGYDLNQPRTPLHYFDSQCMAAMNFQTMHNVTTETKFLLKLVKEGVVKDLSGGIDREF.

The disordered stretch occupies residues 1–25 (MRTKAAGCAERRPLQPRTEAAAAPA). Topologically, residues 1-61 (MRTKAAGCAE…RAQSKMRRPS (61 aa)) are cytoplasmic. Residues 62-82 (LLLKDILKCTLLVFGVWILYI) traverse the membrane as a helical; Signal-anchor for type II membrane protein segment. Over 83–418 (LKLNYTTEEC…DLSGGIDREF (336 aa)) the chain is Lumenal. N-linked (GlcNAc...) asparagine glycosylation is found at asparagine 86, asparagine 236, and asparagine 390. An intrachain disulfide couples cysteine 195 to cysteine 353.

Belongs to the glycosyltransferase 29 family. N-glycosylated. As to expression, ubiquitous. High expression in brain, skeletal muscle, placenta, and testis. mRNA widely distributed in human brain, but slightly elevated expression was observed in the cerebral cortex, temporal lobe, and putamen.

It is found in the golgi apparatus membrane. The enzyme catalyses a beta-D-Gal-(1-&gt;4)-beta-D-Glc-(1&lt;-&gt;1)-Cer(d18:1(4E)) + CMP-N-acetyl-beta-neuraminate = a ganglioside GM3 (d18:1(4E)) + CMP + H(+). It catalyses the reaction ganglioside GA2 (d18:1(4E)/18:0) + CMP-N-acetyl-beta-neuraminate = ganglioside GM2 (d18:1(4E)/18:0) + CMP + H(+). The catalysed reaction is a beta-D-Gal-(1&lt;-&gt;1')-ceramide + CMP-N-acetyl-beta-neuraminate = N-acetyl-alpha-neuraminosyl-(2-&gt;3)-beta-D-galactosyl-(1&lt;-&gt;1')-ceramide + CMP + H(+). It carries out the reaction a beta-D-galactosyl-(1&lt;-&gt;1')-N-acylsphing-4-enine + CMP-N-acetyl-beta-neuraminate = a ganglioside GM4 (d18:1(4E)) + CMP + H(+). The enzyme catalyses ganglioside GA1 (d18:1(4E)/18:0) + CMP-N-acetyl-beta-neuraminate = ganglioside GM1 (d18:1(4E)/18:0) + CMP + H(+). It functions in the pathway glycolipid biosynthesis. Transfers the sialyl group (N-acetyl-alpha-neuraminyl or NeuAc) from CMP-NeuAc to the non-reducing terminal galactose (Gal) of glycosphingolipids forming gangliosides (important molecules involved in the regulation of multiple cellular processes, including cell proliferation and differentiation, apoptosis, embryogenesis, development, and oncogenesis). Mainly involved in the biosynthesis of ganglioside GM3 but can also use different glycolipids as substrate acceptors such as D-galactosylceramide (GalCer), asialo-GM2 (GA2) and asialo-GM1 (GA1), although less preferentially than beta-D-Gal-(1-&gt;4)-beta-D-Glc-(1&lt;-&gt;1)-Cer (LacCer). In Homo sapiens (Human), this protein is Lactosylceramide alpha-2,3-sialyltransferase (ST3GAL5).